The primary structure comprises 359 residues: Guanine nucleotide-binding protein subunit alpha-11 (359 aa).

2 S-palmitoyl cysteine lipidation sites follow: Cys9 and Cys10. The region spanning 38 to 359 is the G-alpha domain; the sequence is RELKLLLLGT…QHNLKEYNLV (322 aa). A G1 motif region spans residues 41–54; the sequence is KLLLLGTGESGKST. Residues 46 to 53 and 180 to 183 contribute to the GTP site; these read GTGESGKS and LRVR. Position 53 (Ser53) interacts with Mg(2+). The segment at 178 to 186 is G2 motif; sequence DVLRVRVPT. Thr186 is a binding site for Mg(2+). The G3 motif stretch occupies residues 201–210; the sequence is FRMVDVGGQR. Residues 270 to 277 are G4 motif; that stretch reads ILFLNKKD. GTP-binding positions include 274 to 277 and Ala331; that span reads NKKD. The segment at 329-334 is G5 motif; the sequence is TCATDT.

The protein belongs to the G-alpha family. G(q) subfamily. In terms of assembly, g proteins are composed of 3 units; alpha, beta and gamma. The alpha chain contains the guanine nucleotide binding site.

It is found in the cell membrane. Its subcellular location is the cytoplasm. It carries out the reaction GTP + H2O = GDP + phosphate + H(+). In terms of biological role, guanine nucleotide-binding proteins (G proteins) function as transducers downstream of G protein-coupled receptors (GPCRs) in numerous signaling cascades. The alpha chain contains the guanine nucleotide binding site and alternates between an active, GTP-bound state and an inactive, GDP-bound state. Signaling by an activated GPCR promotes GDP release and GTP binding. The alpha subunit has a low GTPase activity that converts bound GTP to GDP, thereby terminating the signal. Both GDP release and GTP hydrolysis are modulated by numerous regulatory proteins. Signaling is mediated via phospholipase C-beta-dependent inositol lipid hydrolysis for signal propagation: activates phospholipase C-beta: following GPCR activation, GNA11 activates PLC-beta (PLCB1, PLCB2, PLCB3 or PLCB4), leading to production of diacylglycerol (DAG) and inositol 1,4,5-trisphosphate (IP3). This Xenopus laevis (African clawed frog) protein is Guanine nucleotide-binding protein subunit alpha-11 (gna11).